We begin with the raw amino-acid sequence, 349 residues long: YEVGMMKGGIRKDRRGGRMLKHKRQREENDSRNAGALTEARSTALWPSPLMIKHSKKNSPALSLTADQMVSALLEAEPPVVYSEYDPSRPFNEASVMTLLTNLADRELVHMINWAKRVPGFVDLALHDQVHLLECAWLEILMVGLVWRSMEHPGKLLFAPNLLLDRSHGKVVEGFVEIFDMLLAASSRFRMMNVRGEEFVCLKSIILLNPGIYTYLSSTLKSVEERDHIHRVLDKITDTLMHLMAKSGLSLQQQHRRLAQLLLILSHIRHMSNKGMEHLYSMKCKNVVPLYDLLLEMLDAHRLHAPAAKGSPPSEDDPLNQLAVPSPSMHSLLPCYVNKQEEGNEQEAI.

The nuclear receptor DNA-binding region spans 1 to 5 (YEVGM). The tract at residues 1–38 (YEVGMMKGGIRKDRRGGRMLKHKRQREENDSRNAGALT) is disordered. The segment covering 12–24 (KDRRGGRMLKHKR) has biased composition (basic residues). The region spanning 65 to 301 (TADQMVSALL…DLLLEMLDAH (237 aa)) is the NR LBD domain. Residues 306–327 (PAAKGSPPSEDDPLNQLAVPSP) are disordered.

The protein belongs to the nuclear hormone receptor family. NR3 subfamily. As to quaternary structure, binds DNA as a homodimer. Can form a heterodimer with ER-beta.

It is found in the nucleus. Its function is as follows. The steroid hormones and their receptors are involved in the regulation of eukaryotic gene expression and affect cellular proliferation and differentiation in target tissues. This is Estrogen receptor (ESR1) from Anolis carolinensis (Green anole).